Consider the following 419-residue polypeptide: Phospho-N-acetylmuramoyl-pentapeptide-transferase (419 aa).

The next 10 helical transmembrane spans lie at 22–42, 72–92, 99–119, 135–155, 208–228, 238–258, 278–298, 303–323, 328–348, and 396–416; these read YVSF…TVIG, TPTM…LLLA, ILLM…DDYI, IIGQ…NPAV, VLFG…FISN, GLAT…AYVS, LTIF…YNAY, FMGD…ALII, LLPI…IQVF, and KITV…IATL.

The protein belongs to the glycosyltransferase 4 family. MraY subfamily. The cofactor is Mg(2+).

It localises to the cell inner membrane. The enzyme catalyses UDP-N-acetyl-alpha-D-muramoyl-L-alanyl-gamma-D-glutamyl-meso-2,6-diaminopimeloyl-D-alanyl-D-alanine + di-trans,octa-cis-undecaprenyl phosphate = di-trans,octa-cis-undecaprenyl diphospho-N-acetyl-alpha-D-muramoyl-L-alanyl-D-glutamyl-meso-2,6-diaminopimeloyl-D-alanyl-D-alanine + UMP. It participates in cell wall biogenesis; peptidoglycan biosynthesis. Its function is as follows. Catalyzes the initial step of the lipid cycle reactions in the biosynthesis of the cell wall peptidoglycan: transfers peptidoglycan precursor phospho-MurNAc-pentapeptide from UDP-MurNAc-pentapeptide onto the lipid carrier undecaprenyl phosphate, yielding undecaprenyl-pyrophosphoryl-MurNAc-pentapeptide, known as lipid I. The polypeptide is Phospho-N-acetylmuramoyl-pentapeptide-transferase (Porphyromonas gingivalis (strain ATCC 33277 / DSM 20709 / CIP 103683 / JCM 12257 / NCTC 11834 / 2561)).